We begin with the raw amino-acid sequence, 1563 residues long: Galactose-specific cell agglutination protein gsf2 (1563 aa).

The N-terminal stretch at 1–27 (MSVRRFLSTSARALLFTAALLPSLTSG) is a signal peptide. Tandem repeats lie at residues 203-280 (TTTT…PTTV), 281-358 (TTTT…PTTV), 359-436 (TTTT…PTTV), 437-514 (TTTT…PTTV), 515-592 (TTTT…PTTV), 593-670 (TTTT…PTTV), 671-750 (TTTT…VSAT), 751-825 (TTTT…GTTT), 826-869 (VVIQ…GTTT), 870-913 (VVIQ…GTTT), 914-957 (VVIQ…GTTT), 958-1001 (VVIQ…GTTT), 1002-1045 (VVIQ…GTTT), 1046-1089 (VVIQ…GTTT), 1090-1133 (VVIQ…GTTT), 1134-1140 (VVINTPT), 1141-1162 (TTGS…ETQL), 1163-1184 (TTAT…ETQV), 1185-1200 (TTGT…ETQA), 1201-1221 (TTAT…TETQ), 1223-1244 (TTAT…ETQV), 1245-1266 (TTAT…ETQV), 1267-1282 (TTGT…ETQA), 1283-1304 (TTAT…ETQA), 1305-1326 (TTAT…ETQV), 1327-1348 (TTAT…ETQV), 1349-1364 (TTGT…ETQA), 1365-1386 (TTAT…ETQV), and 1387-1397 (TTATEVQPTTA). The 8 X 78 AA approximate tandem repeats stretch occupies residues 203 to 825 (TTTTTVGYPG…IPTGTTGTTT (623 aa)). 12 N-linked (GlcNAc...) asparagine glycosylation sites follow: Asn224, Asn263, Asn302, Asn341, Asn380, Asn419, Asn458, Asn497, Asn536, Asn575, Asn614, and Asn653. Asn784 is a glycosylation site (N-linked (GlcNAc...) asparagine). The tract at residues 826–1140 (VVIQTPTTVT…TTTVVINTPT (315 aa)) is 8 X 44 AA approximate tandem repeats. Positions 1135-1393 (VINTPTTTGS…TQVTTATEVQ (259 aa)) are disordered. Residues 1141–1397 (TTGSEVLPTT…TATEVQPTTA (257 aa)) are 13 X 22 AA approximate tandem repeats. Asn1510, Asn1516, Asn1529, and Asn1532 each carry an N-linked (GlcNAc...) asparagine glycan. The GPI-anchor amidated serine moiety is linked to residue Ser1539. Positions 1540 to 1563 (SAGANKPIAYLTFVSLFVYIVTLI) are cleaved as a propeptide — removed in mature form.

Belongs to the mam3/map4 family.

It localises to the cell membrane. Its function is as follows. Galactose-specific adhesion protein essential for non-sexual flocculation and filamentous growth. Required for adhesion and filamentous growth through recognition of galactose residues on cell surface glycoconjugates. Induces flocculation when overexpressed. The protein is Galactose-specific cell agglutination protein gsf2 of Schizosaccharomyces pombe (strain 972 / ATCC 24843) (Fission yeast).